The chain runs to 396 residues: Elongation factor Tu 1 (396 aa).

Residues 10–206 (KPHCNIGTIG…AVDAYIPQPE (197 aa)) form the tr-type G domain. Positions 19–26 (GHVDHGKT) are G1. 19-26 (GHVDHGKT) provides a ligand contact to GTP. Threonine 26 lines the Mg(2+) pocket. The G2 stretch occupies residues 60–64 (GITIS). The interval 81–84 (DCPG) is G3. GTP is bound by residues 81–85 (DCPGH) and 136–139 (NKCD). The G4 stretch occupies residues 136–139 (NKCD). The segment at 174 to 176 (SAL) is G5.

This sequence belongs to the TRAFAC class translation factor GTPase superfamily. Classic translation factor GTPase family. EF-Tu/EF-1A subfamily. Monomer.

It localises to the cytoplasm. The catalysed reaction is GTP + H2O = GDP + phosphate + H(+). GTP hydrolase that promotes the GTP-dependent binding of aminoacyl-tRNA to the A-site of ribosomes during protein biosynthesis. This is Elongation factor Tu 1 from Rhodopseudomonas palustris (strain BisB5).